A 200-amino-acid chain; its full sequence is Phospholipase A2 inhibitor CgMIP-I (200 aa).

An N-terminal signal peptide occupies residues 1–19 (MKYLHTICLLFIFVARGNS). 7 disulfides stabilise this stretch: C22/C46, C25/C32, C39/C67, C73/C94, C95/C100, C118/C143, and C136/C165. N-linked (GlcNAc...) asparagine glycosylation is present at N176.

This sequence belongs to the CNF-like-inhibitor family. As to quaternary structure, homomer of 110 kDa composed of 20-25-kDa subunits. Post-translationally, N-glycosylated. The glycosidic chain may contain superficial sialic acid residues. Expressed by the liver.

Its subcellular location is the secreted. Inhibits the enzymatic activity of basic phospholipase A2. Specifically neutralizes PLA2, myotoxic, edema-forming, cytolytic, and anti-coagulant activities, as well as intracerebral lethal effect of the basic myotoxin I from the same venom (AC P0DQP6), crotoxin heterodimer and crotoxin subunit B alone. Does not block the enzymatic activity of crude acidic PLA2 fractions from the same venom. The chain is Phospholipase A2 inhibitor CgMIP-I from Cerrophidion godmani (Porthidium godmani).